A 416-amino-acid polypeptide reads, in one-letter code: MFQKPKGTRDFLPEEMKKRKTIEKKLRKVFDSYNFSEINTPTFESFELLSKKTGDEIRTQLFVFRDHGDREMGLRPELTSSVARFYINEFKNTPKPVKLYYFTNCFRYENPQAGRYREFWQMGSELIGSKKPIADAEVVNMAIEGLKEINMDFEIHIGHLGVLKGVFEKYNLSDDEGNEIRRLIDKEDMDGLKSVLSRLESEKNIEISKKVFEVLDLKGGKEVIPILKEKLADFESSVAALENLDSILEFVPHDYVINFGIARGLDYYTGMVFEVYGKKEGAKQVCGGGRYDNLIELFEGEPSPAVGFAYGFDRIMLNIDDFEVENESIFVVPVKSSEMLLKECLKIAKTLRDSGKSVEVDLMGRKLNKALNYANTKNIKKVLIVGENDIRDGKVSLKNMETGEQSLIELKDILNI.

It belongs to the class-II aminoacyl-tRNA synthetase family.

It localises to the cytoplasm. It catalyses the reaction tRNA(His) + L-histidine + ATP = L-histidyl-tRNA(His) + AMP + diphosphate + H(+). This chain is Histidine--tRNA ligase, found in Methanococcus maripaludis (strain DSM 14266 / JCM 13030 / NBRC 101832 / S2 / LL).